A 485-amino-acid chain; its full sequence is Glutamyl-tRNA(Gln) amidotransferase subunit A (485 aa).

Active-site charge relay system residues include lysine 79 and serine 154. The active-site Acyl-ester intermediate is the serine 178.

The protein belongs to the amidase family. GatA subfamily. As to quaternary structure, heterotrimer of A, B and C subunits.

It catalyses the reaction L-glutamyl-tRNA(Gln) + L-glutamine + ATP + H2O = L-glutaminyl-tRNA(Gln) + L-glutamate + ADP + phosphate + H(+). Its function is as follows. Allows the formation of correctly charged Gln-tRNA(Gln) through the transamidation of misacylated Glu-tRNA(Gln) in organisms which lack glutaminyl-tRNA synthetase. The reaction takes place in the presence of glutamine and ATP through an activated gamma-phospho-Glu-tRNA(Gln). The protein is Glutamyl-tRNA(Gln) amidotransferase subunit A of Staphylococcus haemolyticus (strain JCSC1435).